The sequence spans 590 residues: Probable metalloendopeptidase G1-type (590 aa).

Histidine 41 serves as a coordination point for Zn(2+). The active site involves glutamate 44. Residue histidine 45 coordinates Zn(2+).

It belongs to the peptidase M44 family. Zn(2+) is required as a cofactor.

Functionally, seems to be involved in viral proteins maturation by cleavage at Ala-Gly-|-Xaa motifs. The chain is Probable metalloendopeptidase G1-type (GP045L) from Oryctolagus cuniculus (Rabbit).